Consider the following 849-residue polypeptide: Mechanosensitive ion channel protein 7 (849 aa).

Residues 1 to 49 (MEFRKPFKSHSSYKQIISTGDQNEKTKKKKKLANLDDGDIAKTQSSGSS) form a disordered region. The span at 9-21 (SHSSYKQIISTGD) shows a compositional bias: polar residues. 6 helical membrane-spanning segments follow: residues 231 to 251 (AITL…VLSL), 274 to 294 (LVLI…VFFI), 313 to 333 (TAVQ…FLFD), 344 to 364 (VLLL…LWLI), 606 to 626 (MISF…LEIA), and 642 to 662 (AFMF…LFII).

Belongs to the MscS (TC 1.A.23) family.

It localises to the membrane. Mechanosensitive channel that opens in response to stretch forces in the membrane lipid bilayer. The protein is Mechanosensitive ion channel protein 7 (MSL7) of Arabidopsis thaliana (Mouse-ear cress).